The sequence spans 312 residues: Olfactory receptor 2L5 (312 aa).

The Extracellular portion of the chain corresponds to Met1–Leu24. Asn5 carries N-linked (GlcNAc...) asparagine glycosylation. A helical membrane pass occupies residues Phe25–Ile48. Residues Phe49–Thr56 lie on the Cytoplasmic side of the membrane. A helical membrane pass occupies residues Pro57 to Pro78. Over Lys79 to Gln99 the chain is Extracellular. Cys96 and Cys188 are oxidised to a cystine. Residues Ser100 to Tyr119 traverse the membrane as a helical segment. The Cytoplasmic segment spans residues Asp120 to Arg138. A helical membrane pass occupies residues Met139–Ala157. Residues His158 to Tyr194 lie on the Extracellular side of the membrane. Residues Glu195–Gly218 traverse the membrane as a helical segment. At Trp219–Lys235 the chain is on the cytoplasmic side. A helical membrane pass occupies residues Ala236–Tyr258. The Extracellular portion of the chain corresponds to Leu259–Lys271. Residues Val272 to Leu291 traverse the membrane as a helical segment. The Cytoplasmic segment spans residues Arg292–Met312.

Belongs to the G-protein coupled receptor 1 family.

It localises to the cell membrane. Its function is as follows. Odorant receptor. The polypeptide is Olfactory receptor 2L5 (OR2L5) (Homo sapiens (Human)).